A 214-amino-acid chain; its full sequence is Outer-membrane lipoprotein LolB (214 aa).

An N-terminal signal peptide occupies residues 1 to 25 (MNNLKRLTKTIFSCFTLSALLLLAG). The N-palmitoyl cysteine moiety is linked to residue C26. C26 is lipidated: S-diacylglycerol cysteine. Polar residues predominate over residues 143-160 (QVIESDSQGKPKQLTNTQ). The segment at 143-163 (QVIESDSQGKPKQLTNTQTPP) is disordered.

It belongs to the LolB family. As to quaternary structure, monomer.

Its subcellular location is the cell outer membrane. Its function is as follows. Plays a critical role in the incorporation of lipoproteins in the outer membrane after they are released by the LolA protein. The sequence is that of Outer-membrane lipoprotein LolB from Shewanella baltica (strain OS223).